The primary structure comprises 437 residues: 3-deoxy-D-manno-octulosonic acid transferase (437 aa).

Residues 16-36 (VVLVCAFVIALPKLLYKMLVY) form a helical; Signal-anchor membrane-spanning segment. Glu70 serves as the catalytic Proton acceptor. Residues 279-280 (PR), 319-321 (IGL), and 346-349 (NLLE) each bind CMP.

The protein belongs to the glycosyltransferase group 1 family. Glycosyltransferase 30 subfamily.

Its subcellular location is the cell inner membrane. It carries out the reaction lipid IVA (E. coli) + CMP-3-deoxy-beta-D-manno-octulosonate = alpha-Kdo-(2-&gt;6)-lipid IVA (E. coli) + CMP + H(+). It catalyses the reaction alpha-Kdo-(2-&gt;6)-lipid IVA (E. coli) + CMP-3-deoxy-beta-D-manno-octulosonate = alpha-Kdo-(2-&gt;4)-alpha-Kdo-(2-&gt;6)-lipid IVA (E. coli) + CMP + H(+). The catalysed reaction is alpha-Kdo-(2-&gt;4)-alpha-Kdo-(2-&gt;6)-lipid IVA (E. coli) + CMP-3-deoxy-beta-D-manno-octulosonate = alpha-Kdo-(2-&gt;8)-alpha-Kdo-(2-&gt;4)-alpha-Kdo-(2-&gt;6)-lipid IVA (E. coli) + CMP + H(+). The protein operates within bacterial outer membrane biogenesis; LPS core biosynthesis. Involved in lipopolysaccharide (LPS) biosynthesis. Catalyzes the transfer of three 3-deoxy-D-manno-octulosonate (Kdo) residues from CMP-Kdo to lipid IV(A), the tetraacyldisaccharide-1,4'-bisphosphate precursor of lipid A. Thus generates the genus-specific LPS epitope of Chlamydia, composed of the trisaccharide alpha-Kdo-(2-&gt;8)-alpha-Kdo-(2-&gt;4)-alpha-Kdo. This is 3-deoxy-D-manno-octulosonic acid transferase (waaA) from Chlamydia pneumoniae (Chlamydophila pneumoniae).